The primary structure comprises 475 residues: Sulfate adenylyltransferase subunit 1 (475 aa).

The 215-residue stretch at 25–239 (KSLLRFLTCG…EVLETVEIQR (215 aa)) folds into the tr-type G domain. The tract at residues 34–41 (GSVDDGKS) is G1. 34–41 (GSVDDGKS) is a binding site for GTP. The tract at residues 92-96 (GITID) is G2. Positions 113-116 (DTPG) are G3. GTP-binding positions include 113-117 (DTPGH) and 168-171 (NKMD). A G4 region spans residues 168 to 171 (NKMD). Residues 206–208 (SAL) form a G5 region.

It belongs to the TRAFAC class translation factor GTPase superfamily. Classic translation factor GTPase family. CysN/NodQ subfamily. In terms of assembly, heterodimer composed of CysD, the smaller subunit, and CysN.

The enzyme catalyses sulfate + ATP + H(+) = adenosine 5'-phosphosulfate + diphosphate. It participates in sulfur metabolism; hydrogen sulfide biosynthesis; sulfite from sulfate: step 1/3. Functionally, with CysD forms the ATP sulfurylase (ATPS) that catalyzes the adenylation of sulfate producing adenosine 5'-phosphosulfate (APS) and diphosphate, the first enzymatic step in sulfur assimilation pathway. APS synthesis involves the formation of a high-energy phosphoric-sulfuric acid anhydride bond driven by GTP hydrolysis by CysN coupled to ATP hydrolysis by CysD. This chain is Sulfate adenylyltransferase subunit 1, found in Citrobacter koseri (strain ATCC BAA-895 / CDC 4225-83 / SGSC4696).